We begin with the raw amino-acid sequence, 500 residues long: Beta-xylosidase (500 aa).

Glu-160 functions as the Proton donor in the catalytic mechanism. Catalysis depends on Glu-277, which acts as the Nucleophile.

This sequence belongs to the glycosyl hydrolase 39 family.

It carries out the reaction Hydrolysis of (1-&gt;4)-beta-D-xylans, to remove successive D-xylose residues from the non-reducing termini.. In Thermoanaerobacterium saccharolyticum (strain DSM 8691 / JW/SL-YS485), this protein is Beta-xylosidase (xynB).